Reading from the N-terminus, the 75-residue chain is Exodeoxyribonuclease 7 small subunit (75 aa).

The protein belongs to the XseB family. Heterooligomer composed of large and small subunits.

It is found in the cytoplasm. It carries out the reaction Exonucleolytic cleavage in either 5'- to 3'- or 3'- to 5'-direction to yield nucleoside 5'-phosphates.. Its function is as follows. Bidirectionally degrades single-stranded DNA into large acid-insoluble oligonucleotides, which are then degraded further into small acid-soluble oligonucleotides. This Listeria monocytogenes serotype 4b (strain CLIP80459) protein is Exodeoxyribonuclease 7 small subunit.